The primary structure comprises 87 residues: Small ribosomal subunit protein uS17 (87 aa).

The protein belongs to the universal ribosomal protein uS17 family. Part of the 30S ribosomal subunit.

Its function is as follows. One of the primary rRNA binding proteins, it binds specifically to the 5'-end of 16S ribosomal RNA. The protein is Small ribosomal subunit protein uS17 of Heliobacterium modesticaldum (strain ATCC 51547 / Ice1).